The primary structure comprises 236 residues: UPF0257 lipoprotein YnfC (236 aa).

The N-terminal stretch at 1–16 (MKKPLLLTLLCMILAG) is a signal peptide. Cys17 is lipidated: N-palmitoyl cysteine. Cys17 carries the S-diacylglycerol cysteine lipid modification.

The protein belongs to the UPF0257 family.

The protein localises to the cell membrane. In Salmonella dublin (strain CT_02021853), this protein is UPF0257 lipoprotein YnfC.